Here is a 493-residue protein sequence, read N- to C-terminus: Guanosine-5'-triphosphate,3'-diphosphate pyrophosphatase (493 aa).

This sequence belongs to the GppA/Ppx family. GppA subfamily.

The catalysed reaction is guanosine 3'-diphosphate 5'-triphosphate + H2O = guanosine 3',5'-bis(diphosphate) + phosphate + H(+). The protein operates within purine metabolism; ppGpp biosynthesis; ppGpp from GTP: step 2/2. Functionally, catalyzes the conversion of pppGpp to ppGpp. Guanosine pentaphosphate (pppGpp) is a cytoplasmic signaling molecule which together with ppGpp controls the 'stringent response', an adaptive process that allows bacteria to respond to amino acid starvation, resulting in the coordinated regulation of numerous cellular activities. The chain is Guanosine-5'-triphosphate,3'-diphosphate pyrophosphatase from Salmonella gallinarum (strain 287/91 / NCTC 13346).